The primary structure comprises 224 residues: Putative ribonuclease Z (224 aa).

The Zn(2+) site is built by Asp120 and His184.

It belongs to the RNase Z family. In terms of assembly, homodimer. Zn(2+) serves as cofactor.

It catalyses the reaction Endonucleolytic cleavage of RNA, removing extra 3' nucleotides from tRNA precursor, generating 3' termini of tRNAs. A 3'-hydroxy group is left at the tRNA terminus and a 5'-phosphoryl group is left at the trailer molecule.. Its function is as follows. Zinc phosphodiesterase, which displays some tRNA 3'-processing endonuclease activity. Probably involved in tRNA maturation, by removing a 3'-trailer from precursor tRNA. The polypeptide is Putative ribonuclease Z (rnz) (Mycobacterium tuberculosis (strain CDC 1551 / Oshkosh)).